The chain runs to 190 residues: Peptidyl-tRNA hydrolase (190 aa).

Residue Tyr14 coordinates tRNA. His19 acts as the Proton acceptor in catalysis. Tyr64, Asn66, and Asn112 together coordinate tRNA.

Belongs to the PTH family. In terms of assembly, monomer.

Its subcellular location is the cytoplasm. It carries out the reaction an N-acyl-L-alpha-aminoacyl-tRNA + H2O = an N-acyl-L-amino acid + a tRNA + H(+). Functionally, hydrolyzes ribosome-free peptidyl-tRNAs (with 1 or more amino acids incorporated), which drop off the ribosome during protein synthesis, or as a result of ribosome stalling. Catalyzes the release of premature peptidyl moieties from peptidyl-tRNA molecules trapped in stalled 50S ribosomal subunits, and thus maintains levels of free tRNAs and 50S ribosomes. The polypeptide is Peptidyl-tRNA hydrolase (Chlorobium chlorochromatii (strain CaD3)).